Reading from the N-terminus, the 334-residue chain is N-acetyl-gamma-glutamyl-phosphate reductase (334 aa).

Cys154 is a catalytic residue.

Belongs to the NAGSA dehydrogenase family. Type 1 subfamily.

The protein localises to the cytoplasm. It carries out the reaction N-acetyl-L-glutamate 5-semialdehyde + phosphate + NADP(+) = N-acetyl-L-glutamyl 5-phosphate + NADPH + H(+). Its pathway is amino-acid biosynthesis; L-arginine biosynthesis; N(2)-acetyl-L-ornithine from L-glutamate: step 3/4. Catalyzes the NADPH-dependent reduction of N-acetyl-5-glutamyl phosphate to yield N-acetyl-L-glutamate 5-semialdehyde. The sequence is that of N-acetyl-gamma-glutamyl-phosphate reductase from Escherichia coli O6:H1 (strain CFT073 / ATCC 700928 / UPEC).